The following is a 236-amino-acid chain: tRNA (guanine-N(7)-)-methyltransferase (236 aa).

S-adenosyl-L-methionine contacts are provided by aspartate 35, glutamate 60, asparagine 87, and aspartate 113. The active site involves aspartate 113. The substrate site is built by lysine 117 and aspartate 149.

Belongs to the class I-like SAM-binding methyltransferase superfamily. TrmB family.

The catalysed reaction is guanosine(46) in tRNA + S-adenosyl-L-methionine = N(7)-methylguanosine(46) in tRNA + S-adenosyl-L-homocysteine. It participates in tRNA modification; N(7)-methylguanine-tRNA biosynthesis. Catalyzes the formation of N(7)-methylguanine at position 46 (m7G46) in tRNA. In Parasynechococcus marenigrum (strain WH8102), this protein is tRNA (guanine-N(7)-)-methyltransferase.